A 209-amino-acid chain; its full sequence is PRA1 family protein B1 (209 aa).

An N-acetylalanine modification is found at A2. 5 consecutive transmembrane segments (helical) span residues 73–93 (LAYFKVNYVAIVSLVLAFSLF), 95–115 (HPLSLLVLIGLLGGWMFLYLF), 133–153 (ETLLALVLSTIVVVFMTSVGS), 154–174 (LLTSALMIGVAIVCVHGAFVV), and 185–205 (PANAGLLSFLGGSATSAAAAV).

It belongs to the PRA1 family. Can form homodimer. Interacts with PRA1B2, PRA1B3, PRA1B4, PRA1B5, PRA1B6 and PRA1E.

The protein localises to the endosome membrane. May be involved in both secretory and endocytic intracellular trafficking in the endosomal/prevacuolar compartments. This chain is PRA1 family protein B1 (PRA1B1), found in Arabidopsis thaliana (Mouse-ear cress).